Consider the following 113-residue polypeptide: Iron-sulfur cluster insertion protein ErpA (113 aa).

3 residues coordinate iron-sulfur cluster: C41, C105, and C107.

This sequence belongs to the HesB/IscA family. Homodimer. The cofactor is iron-sulfur cluster.

Its function is as follows. Required for insertion of 4Fe-4S clusters for at least IspG. This chain is Iron-sulfur cluster insertion protein ErpA, found in Colwellia psychrerythraea (strain 34H / ATCC BAA-681) (Vibrio psychroerythus).